The sequence spans 178 residues: Large ribosomal subunit protein uL6 (178 aa).

This sequence belongs to the universal ribosomal protein uL6 family. Part of the 50S ribosomal subunit.

Functionally, this protein binds to the 23S rRNA, and is important in its secondary structure. It is located near the subunit interface in the base of the L7/L12 stalk, and near the tRNA binding site of the peptidyltransferase center. The polypeptide is Large ribosomal subunit protein uL6 (Streptococcus pneumoniae (strain JJA)).